We begin with the raw amino-acid sequence, 254 residues long: Reaction center protein L chain (254 aa).

The next 3 membrane-spanning stretches (helical) occupy residues 10 to 32 (FFGV…GAAL), 60 to 88 (GGLW…SRKL), and 93 to 115 (HVPA…RPLL). The (7R,8Z)-bacteriochlorophyll b site is built by histidine 130 and histidine 150. Residues 148 to 175 (PMHMVAVTLFFTTTLALALHGSLVLAAI) form a helical membrane-spanning segment. Histidine 167 lines the Fe cation pocket. Phenylalanine 193 is an a ubiquinone binding site. A helical transmembrane segment spans residues 202 to 227 (GTLGIHRLGLFLALGAGFASATCILL). Residue histidine 207 participates in Fe cation binding.

This sequence belongs to the reaction center PufL/M/PsbA/D family. Reaction center is composed of four bacteriochlorophylls, two bacteriopheophytins, two ubiquinones, one iron, and two highly hydrophobic polypeptide chains (designated L and M).

Its subcellular location is the cell inner membrane. In terms of biological role, the reaction center is a membrane-bound complex that mediates the initial photochemical event in the electron transfer process of photosynthesis. The protein is Reaction center protein L chain (pufL) of Acidiphilium organovorum.